The primary structure comprises 1196 residues: Jouberin (1196 aa).

Residues 13–45 (KVRFEELLKTHSDLMREKKKLKKKLVRSEENIS) are a coiled coil. S45 carries the phosphoserine modification. 3 disordered regions span residues 56–186 (MKET…EEDE), 215–242 (QLTY…KEVP), and 254–327 (ISGD…HEIT). Residues 80–91 (DDVSAANTNNLK) are compositionally biased toward polar residues. Positions 92–101 (KSTRVTKNKL) are enriched in basic residues. Positions 102–113 (RNTQLATENPNG) are enriched in polar residues. Basic and acidic residues-rich tracts occupy residues 141–154 (LKPE…DSTH), 166–179 (DHQK…GREE), and 224–233 (LFHDDKLSSE). Residues 141–434 (LKPETPENKV…VFNENFPYLL (294 aa)) are interaction with HAP1. Positions 300–309 (KPKKTKKKTK) are enriched in basic residues. WD repeat units follow at residues 607–649 (AGER…FMRE), 652–691 (GHLN…TNTF), 695–735 (PHPS…DSAI), 742–781 (VHKS…NDLE), 797–837 (EFKG…ARKF), 841–880 (ANYR…QVAM), and 885–926 (PFKS…AQQE). S1002 is subject to Phosphoserine. The 61-residue stretch at 1051 to 1111 (DTAPTVVALY…PANHVASETL (61 aa)) folds into the SH3 domain. A disordered region spans residues 1115-1196 (LPPEIKERSP…QAGRKVTLIE (82 aa)). Composition is skewed to basic and acidic residues over residues 1117 to 1136 (PEIK…KIEK) and 1161 to 1182 (THSE…DTRM). Position 1123 is a phosphoserine (S1123).

Self-associates. Part of the tectonic-like complex (also named B9 complex). Interacts with MKS1. Interacts with NPHP1; probably as heterodimers and/or AHI1(2):NPHP1(2) heterotetramers. Interacts (via SH3 domain) with the dynamin GTPase DNM2. Interacts with HAP1; probably as AHI1(2):HAP1(2) heterotetramers. Interacts with RAB8A. Interacts with CEND1. Interacts with CTNNB1/beta-catenin. Interacts with SPATA7. Highly expressed in the most primitive normal hematopoietic cells. Expressed in brain, particularly in neurons that give rise to the crossing axons of the corticospinal tract and superior cerebellar peduncles. Expressed in kidney (renal collecting duct cells) (at protein level).

It is found in the cytoplasm. The protein resides in the cytoskeleton. Its subcellular location is the cilium basal body. It localises to the cell junction. The protein localises to the adherens junction. It is found in the microtubule organizing center. The protein resides in the centrosome. Its subcellular location is the centriole. In terms of biological role, involved in vesicle trafficking and required for ciliogenesis, formation of primary non-motile cilium, and recruitment of RAB8A to the basal body of primary cilium. Component of the tectonic-like complex, a complex localized at the transition zone of primary cilia and acting as a barrier that prevents diffusion of transmembrane proteins between the cilia and plasma membranes. Involved in neuronal differentiation. As a positive modulator of classical Wnt signaling, may play a crucial role in ciliary signaling during cerebellum embryonic development. This is Jouberin (AHI1) from Homo sapiens (Human).